A 285-amino-acid chain; its full sequence is MKAPGLPADQQFFADLFSGLVLNPQLLGRVWFASQPASLPVGSLCIDFPRLDIVLRGEYGNLLEAKQQRLVEGEMLFIPARAANLPVNNKPVMLLSLVFAPTWLGLSFYDSRTTSLLHPARQIQLPSLQRGEGEAMLTALTHLSRSPLEQNIIQPLVLSLLHLCRSVVNMPPGNSQPRGDFLYHSICNWVQDNYAQPLTRESVAQFFNITPNHLSKLFAQHGTMRFIEYVRWVRMAKARMILQKYHLSIHEVAQRCGFPDSDYFCRVFRRQFGLTPGEYSARFQG.

The HTH araC/xylS-type domain occupies 184-282 (HSICNWVQDN…GLTPGEYSAR (99 aa)). 2 consecutive DNA-binding regions (H-T-H motif) follow at residues 201-222 (ESVAQFFNITPNHLSKLFAQHG) and 249-272 (IHEVAQRCGFPDSDYFCRVFRRQF).

This is an uncharacterized protein from Escherichia coli (strain K12).